A 230-amino-acid polypeptide reads, in one-letter code: MTNKEFSDGFSTLLNSFGITPNITLDEYEKSTFLTNAQEQLIIDIYSGRNIIYGKSFEQTEEIRRYLSNLVETYETSTKVTGKLGLSKDSVFFEIPQDTWFITYEVAFLKDSRLGCLDGIEASVVPLPQDDLYRAKDNPFRGPSKDRVLRLDIKSDLAELISKYNVDKYLMRYISQPTPIILVDLPDGLSINGVSTESECELNPVVHRAILERAVQLAIISKTQLTGNKE.

Homododecamer.

It is found in the virion. Its function is as follows. Forms the tail multi-ring barrel with ring protein 1, ring protein 2 and ring protein 4. The chain is Ring protein 3 from Bacteroides intestinalis (Bacteroides phage PhiCrAss001).